A 326-amino-acid chain; its full sequence is Vitamin B12 import system permease protein BtuC (326 aa).

The next 9 membrane-spanning stretches (helical) occupy residues 17–39 (LSLSLLVLLATLLSLCAGEQWIA), 59–81 (RTLAVLLVGAALALSGAVMQALF), 88–107 (PGLLGVSNGAGVGLIAAVLL), 111–133 (QLPGWALGLCAIAGALIITLILL), 146–168 (LLAGVALGIICSALMTWAIYFST), 188–205 (WQQSWLMIALIPVLIWIC), 242–264 (MVGVSVAMAGAIGFIGLVIPHIL), 274–296 (VLLPGCALAGAIALLLADVVARL), and 303–322 (LPIGVVTATLGAPVFIWLLL).

It belongs to the binding-protein-dependent transport system permease family. FecCD subfamily. As to quaternary structure, the complex is composed of two ATP-binding proteins (BtuD), two transmembrane proteins (BtuC) and a solute-binding protein (BtuF).

It localises to the cell inner membrane. Functionally, part of the ABC transporter complex BtuCDF involved in vitamin B12 import. Involved in the translocation of the substrate across the membrane. This is Vitamin B12 import system permease protein BtuC from Salmonella typhi.